We begin with the raw amino-acid sequence, 93 residues long: Small ribosomal subunit protein uS19 (93 aa).

It belongs to the universal ribosomal protein uS19 family.

In terms of biological role, protein S19 forms a complex with S13 that binds strongly to the 16S ribosomal RNA. This chain is Small ribosomal subunit protein uS19, found in Brevibacillus brevis (strain 47 / JCM 6285 / NBRC 100599).